We begin with the raw amino-acid sequence, 553 residues long: Putative transport protein YidE (553 aa).

The next 5 membrane-spanning stretches (helical) occupy residues 4 to 24, 28 to 48, 65 to 85, 95 to 115, and 158 to 178; these read IALTVSILALVAVVGLFIGNV, GIGLGIGGVLFGGIIVGHFVS, FGLILFVYTIGIQVGPGFFAS, LFAVLIVIIGGLVTAILHKLF, and MSYAMAYPFGICGILFTMWML. RCK C-terminal domains follow at residues 191 to 276 and 279 to 361; these read QQHE…VIGQ and DTSL…VLGN. The next 6 membrane-spanning stretches (helical) occupy residues 371–391, 393–413, 439–459, 464–484, 493–513, and 533–553; these read MLPVFIGIGLGVLLGSIPVFV, GFPAALKLGLAGGPLIMALIL, IVLFLSVVGLKSGGDFVNTLV, LSWIGYGALITAVPLITVGIL, YLTMCGMLAGSMTDPPALAFA, and LVMFLRIITPQLLAVLFWSIG.

The protein belongs to the AAE transporter (TC 2.A.81) family. YidE subfamily.

It is found in the cell membrane. This Shigella boydii serotype 18 (strain CDC 3083-94 / BS512) protein is Putative transport protein YidE.